A 413-amino-acid chain; its full sequence is Aspartate aminotransferase, cytoplasmic (413 aa).

Residues G39 and W141 each contribute to the L-aspartate site. Residue S149 is modified to Phosphoserine. N195 contacts L-aspartate. K259 bears the N6-(pyridoxal phosphate)lysine mark. Position 387 (R387) interacts with L-aspartate.

It belongs to the class-I pyridoxal-phosphate-dependent aminotransferase family. As to quaternary structure, homodimer. Pyridoxal 5'-phosphate is required as a cofactor.

Its subcellular location is the cytoplasm. The enzyme catalyses L-aspartate + 2-oxoglutarate = oxaloacetate + L-glutamate. It catalyses the reaction L-cysteine + 2-oxoglutarate = 2-oxo-3-sulfanylpropanoate + L-glutamate. The catalysed reaction is (2S)-2-aminobutanoate + 2-oxoglutarate = 2-oxobutanoate + L-glutamate. It carries out the reaction 3-sulfino-L-alanine + 2-oxoglutarate = 3-sulfinopyruvate + L-glutamate. In terms of biological role, biosynthesis of L-glutamate from L-aspartate or L-cysteine. Important regulator of levels of glutamate, the major excitatory neurotransmitter of the vertebrate central nervous system. Acts as a scavenger of glutamate in brain neuroprotection. The aspartate aminotransferase activity is involved in hepatic glucose synthesis during development and in adipocyte glyceroneogenesis. Using L-cysteine as substrate, regulates levels of mercaptopyruvate, an important source of hydrogen sulfide. Mercaptopyruvate is converted into H(2)S via the action of 3-mercaptopyruvate sulfurtransferase (3MST). Hydrogen sulfide is an important synaptic modulator and neuroprotectant in the brain. The polypeptide is Aspartate aminotransferase, cytoplasmic (Pongo abelii (Sumatran orangutan)).